The primary structure comprises 849 residues: MFDFSLEAIVYAKAISLLATVAVVMMWLFYYCYRLKQKNEVIFGTHHAAYIAYSVCIIAWISSNAYFHTDLLPELGASAGMFMAKFANLASFFAFAFAYYFSCQLAAEQRKGKVHRWQQGIFVSLTVYSLFINLRPGLTVEHVDIVGPSQFIIEFGPHTSYFFIGLVSFVVLTLVNLVAMRTNSSKLTLAKTNYMIAGILVFMLSTAVIHLGMTYFMGDFSLTWLPPALSISEMLFVGYALLTSRFYSVKYIAYLALSVLLVCAIFVLPLGAIFIPLTESNQWLIAIPICALIGITWQLLYKKTSRYASFLIYGDKKTPVQQILSLEEDFKLSIDDAMRRLGKLLQIPNDKLRLVTSNYNETFYEEYLSSNRSVLVFDELSEELEYKVSAKRSMKALYDKMSSNNTALVMPLFGQGKSVTHLLISPHKSNNQMFSNEEISAVQTLLTRVQSTIEADRRIRQSRALANSIAHEMRNPLAQVQLQFEALKQHIENHAPVEQITLDIENGQAAIQRGRQLIDIILREVSDSSPEHEPIAMTSIHKAVDQAVSHYGFENEKIIERIRLPQHTDFVAKLNETLFNFVIFNLIRNAIYYFDSYPDSQIEISTKTGPYENTLIFRDTGPGIDETISHKIFDDFFSYQKSGGSGLGLGYCQRVMRSFGGRIECKSKLGTFTEFHLYFPVVPNAPKADTLRTPYFNDWKQNKRSNEHKVAPNVQINNQSPTVLIVDDKEVQRALVQMYLNQLGVNSLQANNGENAVEVFKANHVDLILMDVQMPVMNGFDASQRIKELSPQTPIVALSGESGERELDMINKLMDGRLEKPTTLNALRHVLGNWLNKNTASSACEAERE.

The next 7 membrane-spanning stretches (helical) occupy residues 9 to 29 (IVYAKAISLLATVAVVMMWLF), 41 to 61 (VIFGTHHAAYIAYSVCIIAWI), 160 to 180 (SYFFIGLVSFVVLTLVNLVAM), 196 to 216 (IAGILVFMLSTAVIHLGMTYF), 220 to 242 (FSLTWLPPALSISEMLFVGYALL), 251 to 275 (YIAYLALSVLLVCAIFVLPLGAIFI), and 283 to 301 (WLIAIPICALIGITWQLLY). Residues 468–683 (SIAHEMRNPL…EFHLYFPVVP (216 aa)) form the Histidine kinase domain. His471 carries the post-translational modification Phosphohistidine; by autocatalysis. A Response regulatory domain is found at 722–835 (TVLIVDDKEV…ALRHVLGNWL (114 aa)). Position 771 is a 4-aspartylphosphate (Asp771).

It localises to the cell inner membrane. The catalysed reaction is ATP + protein L-histidine = ADP + protein N-phospho-L-histidine.. Its function is as follows. At low cell density, in the absence of AI-1 (autoinducer 1), LuxN has a kinase activity and autophosphorylates on His-471. The phosphoryl group is then transferred on Asp-771 of the response regulator domain. The phosphoryl group is transferred to LuxU, and ultimately to LuxO. At high cell density, in the presence of AI-1, the kinase activity is inactivated, and the response regulator domain has a phosphatase activity. LuxN phosphatase acts on itself. As LuxU could function to establish an equilibrium between the aspartyl-phosphate of LuxN and the aspartyl-phosphate of LuxO, LuxU transfers phosphate from LuxO to LuxN and finally phosphate is drained from the system. This is Autoinducer 1 sensor kinase/phosphatase LuxN (luxN) from Vibrio harveyi (Beneckea harveyi).